A 517-amino-acid chain; its full sequence is Ribose import ATP-binding protein RbsA 2 (517 aa).

2 ABC transporter domains span residues 10 to 245 (LRIE…GRSI) and 255 to 498 (DAGE…VSTH). An ATP-binding site is contributed by 42–49 (GENGAGKS). The segment at 497–517 (THTGNSPHSGGTDGTEASRGH) is disordered.

The protein belongs to the ABC transporter superfamily. Ribose importer (TC 3.A.1.2.1) family. The complex is composed of an ATP-binding protein (RbsA), two transmembrane proteins (RbsC) and a solute-binding protein (RbsB).

The protein resides in the cell membrane. The enzyme catalyses D-ribose(out) + ATP + H2O = D-ribose(in) + ADP + phosphate + H(+). In terms of biological role, part of the ABC transporter complex RbsABC involved in ribose import. Responsible for energy coupling to the transport system. In Streptomyces coelicolor (strain ATCC BAA-471 / A3(2) / M145), this protein is Ribose import ATP-binding protein RbsA 2.